Reading from the N-terminus, the 225-residue chain is uncharacterized protein (225 aa).

The chain crosses the membrane as a helical span at residues Ile-181–Phe-203.

Its subcellular location is the cell membrane. This is an uncharacterized protein from Bacillus anthracis.